The sequence spans 926 residues: LPS-assembly protein LptD (926 aa).

The N-terminal stretch at 1–22 (MALKSPAFRKKFPLLVTGSLLA) is a signal peptide. The tract at residues 55 to 91 (AAAVDLPPRPVHDTTSVSSNGTVTSQGTSSGEQSAGT) is disordered. Over residues 68–91 (TTSVSSNGTVTSQGTSSGEQSAGT) the composition is skewed to low complexity.

Belongs to the LptD family. As to quaternary structure, component of the lipopolysaccharide transport and assembly complex. Interacts with LptE and LptA.

Its subcellular location is the cell outer membrane. In terms of biological role, together with LptE, is involved in the assembly of lipopolysaccharide (LPS) at the surface of the outer membrane. This is LPS-assembly protein LptD from Pseudomonas syringae pv. syringae (strain B728a).